The following is a 285-amino-acid chain: Elongation factor Ts (285 aa).

An involved in Mg(2+) ion dislocation from EF-Tu region spans residues 75 to 78 (TDFV).

Belongs to the EF-Ts family.

The protein localises to the cytoplasm. Functionally, associates with the EF-Tu.GDP complex and induces the exchange of GDP to GTP. It remains bound to the aminoacyl-tRNA.EF-Tu.GTP complex up to the GTP hydrolysis stage on the ribosome. This Alcanivorax borkumensis (strain ATCC 700651 / DSM 11573 / NCIMB 13689 / SK2) protein is Elongation factor Ts.